The sequence spans 1216 residues: MCLPSCLLSIWVLFMAAQSLGKTWVPDHCRSPTEATCNFVCDCGDCSDEAQCGFHGASTTPNTPFTCNFEQDPCGWQDISTSGYRWLRDRAGAGLDSSGPHSDHTRGTDLGWYMAVGTHSGKEPSTRTLRSPVMREAAPTCELRLWYHTDSRDVAELRLDLTHGMETLTLWQSSGPWGPWPGRELAVNTGRIQGDFKVTFSATRNATHRGAVALDDMEFWDCGLPIPQARCPLGHHHCQNKACVEPHQLCDGEDNCGDSSDEDPLICSHHMATDFETGLGPWTQLEGWTRNFSAGSMVSPAWPHRDHSRNSAYGFFLVSVAKPGTTAVLYSPEFQGSVSYNCSFTFYYYLHGSEANQFQLFVQAQGLNTTQPPVLLRSRHGELGTAWVRDRVNIQSAHPFRILLAGETGPGGFVGLDDLIMSNHCILVPGMSTLQSSLSGPVPLALYPQTSIKRTCDAGHLSCDELCVPPEQLCDFQQHCAEGEDEEKCGTTDFESASAGGWEDISIGKLQWQRAEAQESGKPARDTNRNAPGHFLSLRKAWGQLRSEARALTPTLGPSGPHCELHMTYYFHSHPQGFLALAVVENGFRELLWQAPSSSSGGWTLQKILLGARRWPFQLEFVSLVDLDGPGQQGAGVDNVTLRDCNPMVTTESDQEVSCNFERDSCSWHTGHLTDAHWHRVKSHGSQYDHTTGQGFFMFLDPMDPPARGQGALLLTRPQVPVVPKECLSFWYHLHGPQIGTLCLAMRREGEEDTLLWSRSGTHGNRWHQAWVTLHHQLQPSTKYQLLFEGLRDGYHGTMGLDDMAVRPGPCWAAKRCSFEDSDCGFSPGDWGLWTRQNNASGLGPWGPWIDHTTGTAQGHYMVVDTSPNLLPKGHVASLTSEEHPPLSRPACLSFWYHLSFHNPGTLRVFVEESTRRQELSISGHGGFAWRLGSVNVQAEQAWKVVFEAMASGVEHSYMALDDISLQDGPCAQPGSCDFESGLCGWSHLPWPGLGGYSWDWSSGATPSRYPRPSVDHTVGTEAGHFAFFETSVLGPGGQAAWLGSEPLPATAVSCLHFWYYMGFPAHFYKGELRVLLSSTQGQLAVWHRGGHLRDQWLQVQIEVSSSEEFQIVFEATLGGQPALGPIALDDVEYLAGQHCKQPTPSQGRVAAPVSVPVAVGGALLLFLLLLGLGGWHWLQKQHLPCQSTDAAASGFDNILFNADQVTLPESITSNP.

The N-terminal stretch at 1–21 is a signal peptide; sequence MCLPSCLLSIWVLFMAAQSLG. The Extracellular segment spans residues 22-1155; the sequence is KTWVPDHCRS…SQGRVAAPVS (1134 aa). Positions 27 to 54 constitute an LDL-receptor class A 1; truncated domain; sequence DHCRSPTEATCNFVCDCGDCSDEAQCGF. The 163-residue stretch at 62–224 folds into the MAM 1 domain; it reads NTPFTCNFEQ…DDMEFWDCGL (163 aa). A glycan (N-linked (GlcNAc...) asparagine) is linked at asparagine 205. The region spanning 229 to 269 is the LDL-receptor class A 2 domain; it reads ARCPLGHHHCQNKACVEPHQLCDGEDNCGDSSDEDPLICSH. Cystine bridges form between cysteine 231/cysteine 243, cysteine 238/cysteine 256, and cysteine 250/cysteine 267. The MAM 2 domain maps to 268-427; it reads SHHMATDFET…DLIMSNHCIL (160 aa). N-linked (GlcNAc...) asparagine glycans are attached at residues asparagine 291, asparagine 341, and asparagine 368. Residues 454–491 enclose the LDL-receptor class A 3 domain; sequence RTCDAGHLSCDELCVPPEQLCDFQQHCAEGEDEEKCGT. Disulfide bonds link cysteine 456/cysteine 467, cysteine 463/cysteine 480, and cysteine 474/cysteine 489. 4 MAM domains span residues 492–647, 654–813, 812–973, and 972–1142; these read TDFE…DCNP, DQEV…PCWA, WAAK…PCAQ, and AQPG…HCKQ. Asparagine 639 is a glycosylation site (N-linked (GlcNAc...) asparagine). N-linked (GlcNAc...) asparagine glycosylation occurs at asparagine 839. The chain crosses the membrane as a helical span at residues 1156-1176; it reads VPVAVGGALLLFLLLLGLGGW. The Cytoplasmic segment spans residues 1177–1216; that stretch reads HWLQKQHLPCQSTDAAASGFDNILFNADQVTLPESITSNP.

Apical endosomal tubules of developing rat intestinal epithelial cells.

The protein resides in the membrane. In terms of biological role, probably involved in the sorting and selective transport of receptors and ligands across polarized epithelia. The polypeptide is Apical endosomal glycoprotein (Mamdc4) (Rattus norvegicus (Rat)).